The sequence spans 734 residues: NAD(P)H-quinone oxidoreductase subunit 5, chloroplastic (734 aa).

Helical transmembrane passes span 9 to 29 (WIIP…LFFF), 40 to 60 (YAII…DLLW), 89 to 109 (IDPL…TVMI), 121 to 140 (YVRF…GLVI), 144 to 166 (LIQI…GFWF), 185 to 205 (GDFG…SFKF), 219 to 239 (HEVS…GPVA), 258 to 278 (TPIS…FLVA), 289 to 311 (LVMS…VALA), 318 to 338 (VLAY…GIGS), 395 to 415 (GTTF…ACFW), and 425 to 445 (WLYF…TGFY). Residues 512-534 (DKNVKNSVSTQSSREEYSPHPKE) are disordered. The segment covering 524–534 (SREEYSPHPKE) has biased composition (basic and acidic residues). The next 3 membrane-spanning stretches (helical) occupy residues 539-559 (MLFP…IGVP), 601-621 (VGTA…IPFF), and 707-727 (ISYY…VVIN).

This sequence belongs to the complex I subunit 5 family. As to quaternary structure, NDH is composed of at least 16 different subunits, 5 of which are encoded in the nucleus.

It is found in the plastid. Its subcellular location is the chloroplast thylakoid membrane. The enzyme catalyses a plastoquinone + NADH + (n+1) H(+)(in) = a plastoquinol + NAD(+) + n H(+)(out). It catalyses the reaction a plastoquinone + NADPH + (n+1) H(+)(in) = a plastoquinol + NADP(+) + n H(+)(out). In terms of biological role, NDH shuttles electrons from NAD(P)H:plastoquinone, via FMN and iron-sulfur (Fe-S) centers, to quinones in the photosynthetic chain and possibly in a chloroplast respiratory chain. The immediate electron acceptor for the enzyme in this species is believed to be plastoquinone. Couples the redox reaction to proton translocation, and thus conserves the redox energy in a proton gradient. In Huperzia lucidula (Shining clubmoss), this protein is NAD(P)H-quinone oxidoreductase subunit 5, chloroplastic (ndhF).